The following is a 58-amino-acid chain: Small ribosomal subunit protein bS21 (58 aa).

The tract at residues Lys34 to Lys58 is disordered. The span at Val43–Lys58 shows a compositional bias: basic residues.

Belongs to the bacterial ribosomal protein bS21 family.

This is Small ribosomal subunit protein bS21 from Clostridium acetobutylicum (strain ATCC 824 / DSM 792 / JCM 1419 / IAM 19013 / LMG 5710 / NBRC 13948 / NRRL B-527 / VKM B-1787 / 2291 / W).